Consider the following 337-residue polypeptide: Glucose transporter 2C (337 aa).

The interval 1 to 22 (MTERRDNVSHAPDAIEGPNDGA) is disordered. Residues 1-43 (MTERRDNVSHAPDAIEGPNDGAHAEDTSPGFFSLENLGVAQVQ) are Cytoplasmic-facing. Residues 44 to 64 (VVGGTLNGFSIGFVAVYILLY) traverse the membrane as a helical segment. Residues 65–119 (EVATNCSLFKTTEACKAVGSYGCEWKDTEVCSWKKECDSDSDGVNPCESLIGYSS) are Extracellular-facing. A glycan (N-linked (GlcNAc...) asparagine) is linked at N69. The helical transmembrane segment at 120–140 (LYSGIFASAMIVGSMVGSIIA) threads the bilayer. Residues 141-152 (GKCITMFGLKKS) are Cytoplasmic-facing. Residues 153 to 173 (FIIVGVMSVVASALNHISVAT) traverse the membrane as a helical segment. The Extracellular segment spans residues 174 to 175 (NE). Residues 176–196 (FWVLCAGRVLMGIGLGVVCVI) form a helical membrane-spanning segment. The Cytoplasmic segment spans residues 197 to 214 (CPMYVNENAHPKLSKVDG). The helical transmembrane segment at 215–235 (VLFQVFITFGIMLAAMLGLIL) threads the bilayer. Topologically, residues 236-250 (DKTVNYDNDPDMAGR) are extracellular. The chain crosses the membrane as a helical span at residues 251 to 271 (FHGFCAVSSVLSVAMFLVGMF). Over 272–300 (LRESTATFSQDDDGKADGGMDPNEYGWGQ) the chain is Cytoplasmic. The chain crosses the membrane as a helical span at residues 301–321 (MLWPLFMGAVTAGTLQLTGIN). Topologically, residues 322–337 (AVMNYAPKITENLGMD) are extracellular.

Belongs to the major facilitator superfamily. Sugar transporter (TC 2.A.1.1) family.

The protein resides in the membrane. Its function is as follows. Facilitative glucose transporter. The sequence is that of Glucose transporter 2C (THT2C) from Trypanosoma brucei brucei.